We begin with the raw amino-acid sequence, 707 residues long: Ribosomal RNA large subunit methyltransferase K/L (707 aa).

A THUMP domain is found at 44–155 (VIYNLCLWSR…NDILTVSFDL (112 aa)).

Belongs to the methyltransferase superfamily. RlmKL family.

The protein localises to the cytoplasm. It carries out the reaction guanosine(2445) in 23S rRNA + S-adenosyl-L-methionine = N(2)-methylguanosine(2445) in 23S rRNA + S-adenosyl-L-homocysteine + H(+). The enzyme catalyses guanosine(2069) in 23S rRNA + S-adenosyl-L-methionine = N(2)-methylguanosine(2069) in 23S rRNA + S-adenosyl-L-homocysteine + H(+). Specifically methylates the guanine in position 2445 (m2G2445) and the guanine in position 2069 (m7G2069) of 23S rRNA. The protein is Ribosomal RNA large subunit methyltransferase K/L of Legionella pneumophila (strain Corby).